The primary structure comprises 101 residues: Small ribosomal subunit protein uS10 (101 aa).

It belongs to the universal ribosomal protein uS10 family. Part of the 30S ribosomal subunit.

Functionally, involved in the binding of tRNA to the ribosomes. The polypeptide is Small ribosomal subunit protein uS10 (Flavobacterium johnsoniae (strain ATCC 17061 / DSM 2064 / JCM 8514 / BCRC 14874 / CCUG 350202 / NBRC 14942 / NCIMB 11054 / UW101) (Cytophaga johnsonae)).